A 77-amino-acid polypeptide reads, in one-letter code: Conotoxin Bt6.6 (77 aa).

The first 19 residues, 1-19, serve as a signal peptide directing secretion; the sequence is MEKLTILLLVAAVLMSTQA. The propeptide occupies 20 to 38; that stretch reads LIQSDGEKRQQAKINFLSX. 3 cysteine pairs are disulfide-bonded: cysteine 51–cysteine 65, cysteine 58–cysteine 69, and cysteine 64–cysteine 74.

The protein belongs to the conotoxin O2 superfamily. As to expression, expressed by the venom duct.

The protein localises to the secreted. The chain is Conotoxin Bt6.6 from Conus betulinus (Beech cone).